A 390-amino-acid chain; its full sequence is Cathepsin D (390 aa).

Residues 1-44 (VIRIPLHKFTSIRRTMSEAAGXVXXLIAKGPISKYATGEPAVRQ) constitute a propeptide, activation peptide. The region spanning 59-385 (YYGEIGIGTP…DRDQNRVGLA (327 aa)) is the Peptidase A1 domain. 2 disulfide bridges follow: cysteine 71–cysteine 140 and cysteine 90–cysteine 97. The active site involves aspartate 77. N-linked (GlcNAc...) asparagine glycosylation is found at asparagine 114 and asparagine 241. A disulfide bridge links cysteine 264 with cysteine 268. Residue aspartate 273 is part of the active site. Residues cysteine 307 and cysteine 344 are joined by a disulfide bond.

Belongs to the peptidase A1 family. In terms of assembly, consists of a light chain and a heavy chain. Interacts with ADAM30; this leads to activation of CTSD. Interacts with GRN; stabilizes CTSD; increases its proteolytic activity. In terms of processing, N- and O-glycosylated. Post-translationally, undergoes proteolytic cleavage and activation by ADAM30.

It localises to the lysosome. It is found in the melanosome. The protein resides in the secreted. Its subcellular location is the extracellular space. The enzyme catalyses Specificity similar to, but narrower than, that of pepsin A. Does not cleave the 4-Gln-|-His-5 bond in B chain of insulin.. Functionally, acid protease active in intracellular protein breakdown. Plays a role in APP processing following cleavage and activation by ADAM30 which leads to APP degradation. This is Cathepsin D (CTSD) from Bos taurus (Bovine).